Reading from the N-terminus, the 118-residue chain is Large ribosomal subunit protein bL20 (118 aa).

Belongs to the bacterial ribosomal protein bL20 family.

Its function is as follows. Binds directly to 23S ribosomal RNA and is necessary for the in vitro assembly process of the 50S ribosomal subunit. It is not involved in the protein synthesizing functions of that subunit. This Thermotoga maritima (strain ATCC 43589 / DSM 3109 / JCM 10099 / NBRC 100826 / MSB8) protein is Large ribosomal subunit protein bL20 (rplT).